Reading from the N-terminus, the 257-residue chain is Large ribosomal subunit protein uL3 (257 aa).

The residue at position 151 (Gln-151) is an N5-methylglutamine. Residues 218 to 257 form a disordered region; the sequence is YPASIKSAANTNTAPADAPVETPAEEAVVDTAATDGAQES. Residues 225-236 show a composition bias toward low complexity; the sequence is AANTNTAPADAP.

It belongs to the universal ribosomal protein uL3 family. As to quaternary structure, part of the 50S ribosomal subunit. Forms a cluster with proteins L14 and L19. In terms of processing, methylated by PrmB.

Its function is as follows. One of the primary rRNA binding proteins, it binds directly near the 3'-end of the 23S rRNA, where it nucleates assembly of the 50S subunit. The protein is Large ribosomal subunit protein uL3 of Sphingopyxis alaskensis (strain DSM 13593 / LMG 18877 / RB2256) (Sphingomonas alaskensis).